The chain runs to 268 residues: 5'-nucleotidase SurE (268 aa).

Residues Asp8, Asp9, Ser40, and Asn98 each contribute to the a divalent metal cation site.

Belongs to the SurE nucleotidase family. A divalent metal cation is required as a cofactor.

The protein resides in the cytoplasm. The enzyme catalyses a ribonucleoside 5'-phosphate + H2O = a ribonucleoside + phosphate. In terms of biological role, nucleotidase that shows phosphatase activity on nucleoside 5'-monophosphates. This chain is 5'-nucleotidase SurE, found in Trichodesmium erythraeum (strain IMS101).